Reading from the N-terminus, the 500-residue chain is Metal transporter Nramp3.1 (500 aa).

Helical transmembrane passes span 51–71 (LWLF…PGNL), 79–99 (AIAG…GLLV), 128–148 (MILW…EVIG), 160–180 (VLPL…FLFL), 188–208 (LEAA…WMFA), 234–254 (AVGV…SALV), 280–300 (AALA…AKGF), 322–342 (YGGG…AAGQ), 370–390 (ALIT…VFDT), 401–421 (WLNM…LCLV), 439–459 (VSWL…LDFF), and 467–487 (VFTT…IYLI).

This sequence belongs to the NRAMP (TC 2.A.55) family. In terms of tissue distribution, expressed in roots, stems, buds and leaves.

It is found in the golgi apparatus. The protein localises to the trans-Golgi network membrane. The enzyme catalyses Mn(2+)(in) = Mn(2+)(out). The catalysed reaction is Fe(2+)(in) = Fe(2+)(out). In terms of biological role, divalent metal transporter. Can transport manganese (Mn) and iron (Fe). Involved in the control of cell-to-cell transport of manganese (Mn) between organs and tissues to monitor Mn homeostasis. In Populus trichocarpa (Western balsam poplar), this protein is Metal transporter Nramp3.1.